Reading from the N-terminus, the 99-residue chain is Transposase InsE for insertion sequence IS3A (99 aa).

The tract at residues 1-21 is disordered; sequence MTKTVSTSKKPRKQHSPEFRS.

Belongs to the transposase 8 family.

Involved in the transposition of the insertion sequence IS3. The sequence is that of Transposase InsE for insertion sequence IS3A (insE1) from Escherichia coli (strain K12).